Here is a 105-residue protein sequence, read N- to C-terminus: Putative regulatory protein COPRO5265_1186 (105 aa).

The segment at 76-105 is disordered; the sequence is RLEEEEEEEERTEPITEQEAELEEESGEDV. Acidic residues predominate over residues 78 to 105; that stretch reads EEEEEEEERTEPITEQEAELEEESGEDV.

This sequence belongs to the RemA family.

This is Putative regulatory protein COPRO5265_1186 from Coprothermobacter proteolyticus (strain ATCC 35245 / DSM 5265 / OCM 4 / BT).